Here is a 1147-residue protein sequence, read N- to C-terminus: Myosin light chain kinase, smooth muscle (1147 aa).

Residues 1-41 form an actin-binding region; sequence MDFRANLQRQVKPKTVSEEERKVHSPQQVDFRSVLAKKGTP. Positions 1 to 330 are disordered; sequence MDFRANLQRQ…PPASPGTAPT (330 aa). The tract at residues 26–41 is calmodulin-binding; sequence PQQVDFRSVLAKKGTP. Pro residues predominate over residues 43-55; the sequence is TPVPEKAPPPKPA. 2 tandem repeats follow at residues 100-111 and 112-123. The interval 100–288 is 16 X 12 AA tandem repeats; the sequence is SLKPVANAKP…KAVANAKPAE (189 aa). Residues 124-132 form a 3; truncated repeat; sequence TLKPVANAE. Tandem repeats lie at residues 133 to 144, 145 to 156, 157 to 168, 169 to 180, 181 to 192, 193 to 204, 205 to 216, 217 to 228, 229 to 240, 241 to 252, 253 to 264, 265 to 276, and 277 to 288. Residues 292 to 692 form an actin-binding (calcium/calmodulin-insensitive) region; the sequence is PAGKEELKKE…TVTVNTEQKV (401 aa). Over residues 293–320 the composition is skewed to basic and acidic residues; that stretch reads AGKEELKKEVQNDVNCKREKAGAADNEK. Ig-like C2-type domains are found at residues 329 to 417 and 469 to 557; these read PTFK…CHVT and PQIP…VNLT. C350 and C401 are joined by a disulfide. 2 disordered regions span residues 424-476 and 644-678; these read SENA…QFPE and SEPS…KEPE. The segment covering 459–472 has biased composition (pro residues); sequence PKTPPKAATPPQIP. The Fibronectin type-III domain maps to 565 to 657; sequence PAGTPCASDI…QESELTTVGE (93 aa). Polar residues predominate over residues 644 to 653; that stretch reads SEPSQESELT. Over residues 662-677 the composition is skewed to acidic residues; that stretch reads PKDEVEEVSDDDEKEP. S670 bears the Phosphoserine mark. Y681 bears the Phosphotyrosine; by ABL1 mark. The Protein kinase domain occupies 696-951; that stretch reads YDIEERLGSG…CTQCLQHPWL (256 aa). ATP is bound by residues 702–710 and K725; that span reads LGSGKFGQV. At Y807 the chain carries Phosphotyrosine; by ABL1. Catalysis depends on D817, which acts as the Proton acceptor. Y867 is modified (phosphotyrosine; by ABL1). The segment at 943 to 1006 is calmodulin-binding; sequence TQCLQHPWLM…SGLSGRKSST (64 aa). S991, S992, S1004, S1005, and S1008 each carry phosphoserine. A disordered region spans residues 999–1019; it reads LSGRKSSTGSPTSPLTAERLE. A compositionally biased stretch (polar residues) spans 1002–1013; it reads RKSSTGSPTSPL. Phosphothreonine is present on T1010. S1011 carries the post-translational modification Phosphoserine. Positions 1041 to 1130 constitute an Ig-like C2-type 3 domain; sequence PYFSKTIRDL…GEATCTAELI (90 aa). C1062 and C1114 form a disulfide bridge.

It belongs to the protein kinase superfamily. CAMK Ser/Thr protein kinase family. As to quaternary structure, all isoforms including Telokin bind calmodulin. Interacts with SVIL. Interacts with CTTN; this interaction is reduced during thrombin-induced endothelial cell (EC) contraction but is promoted by the barrier-protective agonist sphingosine 1-phosphate (S1P) within lamellipodia. A complex made of ABL1, CTTN and MYLK regulates cortical actin-based cytoskeletal rearrangement critical to sphingosine 1-phosphate (S1P)-mediated endothelial cell (EC) barrier enhancement. Binds to NAA10/ARD1 and PTK2B/PYK2. The cofactor is Mg(2+). Ca(2+) serves as cofactor. Post-translationally, the C-terminus is deglutamylated by AGTPBP1/CCP1, AGBL1/CCP4 and AGBL4/CCP6, leading to the formation of Myosin light chain kinase, smooth muscle, deglutamylated form. The consequences of C-terminal deglutamylation are unknown. In terms of processing, can probably be down-regulated by phosphorylation. Tyrosine phosphorylation by ABL1 increases kinase activity, reverses MLCK-mediated inhibition of Arp2/3-mediated actin polymerization, and enhances CTTN-binding. Phosphorylation by SRC promotes CTTN binding. Isoform Telokin is found in all smooth muscle tested except the aorta. It is not present in non-muscle tissue.

It localises to the cytoplasm. The protein resides in the cell projection. Its subcellular location is the lamellipodium. The protein localises to the cleavage furrow. It is found in the cytoskeleton. It localises to the stress fiber. The catalysed reaction is L-seryl-[myosin light chain] + ATP = O-phospho-L-seryl-[myosin light chain] + ADP + H(+). It catalyses the reaction L-threonyl-[myosin light chain] + ATP = O-phospho-L-threonyl-[myosin light chain] + ADP + H(+). Its activity is regulated as follows. All catalytically active isoforms require binding to calcium and calmodulin for activation. Its function is as follows. Calcium/calmodulin-dependent myosin light chain kinase implicated in smooth muscle contraction via phosphorylation of myosin light chains (MLC). Also regulates actin-myosin interaction through a non-kinase activity. Phosphorylates PTK2B/PYK2 and myosin light-chains. Involved in the inflammatory response (e.g. apoptosis, vascular permeability, leukocyte diapedesis), cell motility and morphology, airway hyperreactivity and other activities relevant to asthma. Required for tonic airway smooth muscle contraction that is necessary for physiological and asthmatic airway resistance. Necessary for gastrointestinal motility. Implicated in the regulation of endothelial as well as vascular permeability, probably via the regulation of cytoskeletal rearrangements. In the nervous system it has been shown to control the growth initiation of astrocytic processes in culture and to participate in transmitter release at synapses formed between cultured sympathetic ganglion cells. Critical participant in signaling sequences that result in fibroblast apoptosis. Plays a role in the regulation of epithelial cell survival. Required for epithelial wound healing, especially during actomyosin ring contraction during purse-string wound closure. Mediates RhoA-dependent membrane blebbing. Triggers TRPC5 channel activity in a calcium-dependent signaling, by inducing its subcellular localization at the plasma membrane. Promotes cell migration (including tumor cells) and tumor metastasis. PTK2B/PYK2 activation by phosphorylation mediates ITGB2 activation and is thus essential to trigger neutrophil transmigration during acute lung injury (ALI). May regulate optic nerve head astrocyte migration. Probably involved in mitotic cytoskeletal regulation. Regulates tight junction probably by modulating ZO-1 exchange in the perijunctional actomyosin ring. Mediates burn-induced microvascular barrier injury; triggers endothelial contraction in the development of microvascular hyperpermeability by phosphorylating MLC. Essential for intestinal barrier dysfunction. Mediates Giardia spp.-mediated reduced epithelial barrier function during giardiasis intestinal infection via reorganization of cytoskeletal F-actin and tight junctional ZO-1. Necessary for hypotonicity-induced Ca(2+) entry and subsequent activation of volume-sensitive organic osmolyte/anion channels (VSOAC) in cervical cancer cells. The sequence is that of Myosin light chain kinase, smooth muscle (MYLK) from Oryctolagus cuniculus (Rabbit).